Here is a 327-residue protein sequence, read N- to C-terminus: Microtubule-associated protein RP/EB family member 2 (327 aa).

A disordered region spans residues 1–21; that stretch reads MPGPTQTLSPNGENNNDIIQD. At Ser9 the chain carries Phosphoserine. The region spanning 57–159 is the Calponin-homology (CH) domain; sequence TMSRHDIIAW…FIQWFKKFYD (103 aa). Tyr167 is subject to Phosphotyrosine. Disordered regions lie at residues 171–240 and 299–327; these read EARQ…DKDL and ASEE…QEEY. Residues 187–327 are DCTN1-binding; the sequence is QIFNLPKKSH…EQQPPQQEEY (141 aa). The segment covering 200 to 234 has biased composition (low complexity); the sequence is SPTAGAAKSSPAAKPGSTPSRPSSAKRASSSGSAS. Ser219 is subject to Phosphoserine. An EB1 C-terminal domain is found at 236–306; sequence SDKDLETQVI…LYASEEHEGH (71 aa). Positions 259-302 are APC-binding; sequence EGVEKERDFYFGKLREIELLCQEHGQENDDLVQRLMDVLYASEE. Basic and acidic residues predominate over residues 300–317; the sequence is SEEHEGHTEEPEAEEQAH. Positions 318–327 are enriched in low complexity; that stretch reads EQQPPQQEEY.

It belongs to the MAPRE family. Interacts with DCTN1. Interacts with APC (via C-terminal). Interacts with monomeric and polymerized tubulin. Interacts with SLAIN1. Interacts (via the N-terminal region) with BAG1.

It is found in the cytoplasm. It localises to the cytoskeleton. Functionally, may be involved in microtubule polymerization, and spindle function by stabilizing microtubules and anchoring them at centrosomes. May play a role in cell migration. This chain is Microtubule-associated protein RP/EB family member 2 (MAPRE2), found in Pongo abelii (Sumatran orangutan).